The primary structure comprises 139 residues: uncharacterized protein (139 aa).

A helical transmembrane segment spans residues 77 to 97 (YCFFFFLVLFLNGIIATRGKA).

It is found in the mitochondrion membrane. This is an uncharacterized protein from Arabidopsis thaliana (Mouse-ear cress).